A 210-amino-acid chain; its full sequence is UPF0301 protein Mnod_6933 (210 aa).

It belongs to the UPF0301 (AlgH) family.

This Methylobacterium nodulans (strain LMG 21967 / CNCM I-2342 / ORS 2060) protein is UPF0301 protein Mnod_6933.